Reading from the N-terminus, the 276-residue chain is Putative pyruvate, phosphate dikinase regulatory protein 1 (276 aa).

150–157 (GLPRTSKT) is an ADP binding site.

Belongs to the pyruvate, phosphate/water dikinase regulatory protein family. PDRP subfamily.

The enzyme catalyses N(tele)-phospho-L-histidyl/L-threonyl-[pyruvate, phosphate dikinase] + ADP = N(tele)-phospho-L-histidyl/O-phospho-L-threonyl-[pyruvate, phosphate dikinase] + AMP + H(+). It catalyses the reaction N(tele)-phospho-L-histidyl/O-phospho-L-threonyl-[pyruvate, phosphate dikinase] + phosphate + H(+) = N(tele)-phospho-L-histidyl/L-threonyl-[pyruvate, phosphate dikinase] + diphosphate. In terms of biological role, bifunctional serine/threonine kinase and phosphorylase involved in the regulation of the pyruvate, phosphate dikinase (PPDK) by catalyzing its phosphorylation/dephosphorylation. The sequence is that of Putative pyruvate, phosphate dikinase regulatory protein 1 from Syntrophomonas wolfei subsp. wolfei (strain DSM 2245B / Goettingen).